Consider the following 380-residue polypeptide: Succinyl-diaminopimelate desuccinylase (380 aa).

Histidine 71 is a Zn(2+) binding site. Aspartate 73 is a catalytic residue. Aspartate 104 contributes to the Zn(2+) binding site. Glutamate 138 serves as the catalytic Proton acceptor. Zn(2+) contacts are provided by glutamate 139, glutamate 167, and histidine 353.

It belongs to the peptidase M20A family. DapE subfamily. As to quaternary structure, homodimer. Zn(2+) serves as cofactor. Co(2+) is required as a cofactor.

It catalyses the reaction N-succinyl-(2S,6S)-2,6-diaminopimelate + H2O = (2S,6S)-2,6-diaminopimelate + succinate. It participates in amino-acid biosynthesis; L-lysine biosynthesis via DAP pathway; LL-2,6-diaminopimelate from (S)-tetrahydrodipicolinate (succinylase route): step 3/3. Functionally, catalyzes the hydrolysis of N-succinyl-L,L-diaminopimelic acid (SDAP), forming succinate and LL-2,6-diaminopimelate (DAP), an intermediate involved in the bacterial biosynthesis of lysine and meso-diaminopimelic acid, an essential component of bacterial cell walls. The polypeptide is Succinyl-diaminopimelate desuccinylase (Shewanella baltica (strain OS185)).